The primary structure comprises 138 residues: uncharacterized protein (138 aa).

It is found in the plastid. It localises to the chloroplast. This is an uncharacterized protein from Chlorella vulgaris (Green alga).